A 107-amino-acid polypeptide reads, in one-letter code: Wound-induced proteinase inhibitor 1 (107 aa).

The signal sequence occupies residues M1–A23. The propeptide occupies R24–Q36.

It belongs to the protease inhibitor I13 (potato type I serine protease inhibitor) family. As to quaternary structure, heterogeneous tetramers of similar chains.

In terms of biological role, inhibits both chymotrypsin and trypsin. This Solanum tuberosum (Potato) protein is Wound-induced proteinase inhibitor 1.